The sequence spans 447 residues: MKRVVIAGTSSMVGKTTISTGIMKALSKKNNVQPYKIGPDYIDPTYHTEATKNKSRNLDSFFMDEMQVRSIFKRHSKNKDINVIEGVRGLYEGISPYNDVGSTASVSKTLNAPVILLMDARSLTRSAAAIIKGFKSFDTELNIKGVIFNKIRGEGHLNKLKEAVKYYDNDIEIIGAIPRDDGLSVSQRHLGLVPTPENKQKLLERIDLWGNTVEECLDIEKIVELSDESFDFEVDEKNKEETLWKVEKNNSKIAVAFDESFNFYYWDNFDALEENGAKIKFFSPLNDVEVPDCDTIYLGGGYPELFSEKLSNNKSMIDSIRNFDGKIYGECGGLMYLTNSIDGKEMLKLIDADAVMTPNVQGLSYVKGTFEKDCIIGEKSKEFKAHEFHYSKLININENDFSYRINRGKGIINSMDGITSKDGDIVGGYAHQHCIGNPYFAANLSKT.

The region spanning Lys-252–Tyr-439 is the GATase cobBQ-type domain. Cys-331 acts as the Nucleophile in catalysis.

Belongs to the CobB/CbiA family. Requires Mg(2+) as cofactor.

The enzyme catalyses cob(II)yrinate + 2 L-glutamine + 2 ATP + 2 H2O = cob(II)yrinate a,c diamide + 2 L-glutamate + 2 ADP + 2 phosphate + 2 H(+). It carries out the reaction Ni-sirohydrochlorin + 2 L-glutamine + 2 ATP + 2 H2O = Ni-sirohydrochlorin a,c-diamide + 2 L-glutamate + 2 ADP + 2 phosphate + 2 H(+). Its pathway is cofactor biosynthesis; adenosylcobalamin biosynthesis; cob(II)yrinate a,c-diamide from sirohydrochlorin (anaerobic route): step 10/10. Functionally, catalyzes the ATP-dependent amidation of the two carboxylate groups at positions a and c of cobyrinate, using either L-glutamine or ammonia as the nitrogen source. Involved in the biosynthesis of the unique nickel-containing tetrapyrrole coenzyme F430, the prosthetic group of methyl-coenzyme M reductase (MCR), which plays a key role in methanogenesis and anaerobic methane oxidation. Catalyzes the ATP-dependent amidation of the two carboxylate groups at positions a and c of Ni-sirohydrochlorin, using L-glutamine or ammonia as the nitrogen source. This Methanococcus maripaludis (strain C5 / ATCC BAA-1333) protein is Cobyrinate a,c-diamide synthase.